The chain runs to 290 residues: MNGKIIKGIGGFYYIKTDQGLIECKARGKFRHKDIKPMVGDDVTIKMEHGKGVIEEIHERKSELVRPTVANVSLAFVVFAVKNPDINFDLLNKFLILCEYNNIEVIVCLNKIDLVSEEEREEIKKRINVIGYEVLFINAKKGIGIERLEEKIRGNITVFCGPSGAGKSTLINKLSNKEHMETGNVSVKLGRGKHTTRHSELIEVADGYIVDTPGFSTLEIKDLMDKNSLKYCFPEFTQYNDKCKYRGCLHYKEPNCALKEAVESEKINRYRYEFYVRALEEIIEEEKNKW.

The region spanning 61-218 (KSELVRPTVA…IVDTPGFSTL (158 aa)) is the CP-type G domain. Residues 110 to 113 (NKID) and 161 to 169 (GPSGAGKST) each bind GTP. 4 residues coordinate Zn(2+): C243, C248, H250, and C256.

This sequence belongs to the TRAFAC class YlqF/YawG GTPase family. RsgA subfamily. In terms of assembly, monomer. Associates with 30S ribosomal subunit, binds 16S rRNA. Zn(2+) serves as cofactor.

It localises to the cytoplasm. One of several proteins that assist in the late maturation steps of the functional core of the 30S ribosomal subunit. Helps release RbfA from mature subunits. May play a role in the assembly of ribosomal proteins into the subunit. Circularly permuted GTPase that catalyzes slow GTP hydrolysis, GTPase activity is stimulated by the 30S ribosomal subunit. In Clostridium beijerinckii (strain ATCC 51743 / NCIMB 8052) (Clostridium acetobutylicum), this protein is Small ribosomal subunit biogenesis GTPase RsgA.